We begin with the raw amino-acid sequence, 473 residues long: Probable glycine dehydrogenase (decarboxylating) subunit 2 (473 aa).

Lys266 is subject to N6-(pyridoxal phosphate)lysine.

Belongs to the GcvP family. C-terminal subunit subfamily. As to quaternary structure, the glycine cleavage system is composed of four proteins: P, T, L and H. In this organism, the P 'protein' is a heterodimer of two subunits. Pyridoxal 5'-phosphate serves as cofactor.

It carries out the reaction N(6)-[(R)-lipoyl]-L-lysyl-[glycine-cleavage complex H protein] + glycine + H(+) = N(6)-[(R)-S(8)-aminomethyldihydrolipoyl]-L-lysyl-[glycine-cleavage complex H protein] + CO2. In terms of biological role, the glycine cleavage system catalyzes the degradation of glycine. The P protein binds the alpha-amino group of glycine through its pyridoxal phosphate cofactor; CO(2) is released and the remaining methylamine moiety is then transferred to the lipoamide cofactor of the H protein. This is Probable glycine dehydrogenase (decarboxylating) subunit 2 from Thermus thermophilus (strain ATCC BAA-163 / DSM 7039 / HB27).